Reading from the N-terminus, the 355-residue chain is MDQSFGNLGGGGGAGGSGKAAASSFLQLPLSTAAAATAYYGTPLALHQAAAAAGPSQYHGHGHPHHGGGHHHSKHGGAGGGEISAAEAESIKAKIMAHPQYSALLAAYLDCQKVGAPPEVLERLTATAAKLDARPPGRHDARDPELDQFMEAYCNMLAKYREELTRPIDEAMEFLKRVESQLDTIAGGAHGGGAGSARLLLADGKSECVGSSEDDMDPSGRENEPPEIDPRAEDKELKFQLLKKYSGYLSSLRQEFSKKKKKGKLPKEARQKLLHWWELHYKWPYPSETEKIALAESTGLDQKQINNWFINQRKRHWKPSEDMPFVMMEGFHPQNAAALYMDGPFMADGMYRLGS.

2 disordered regions span residues 52 to 82 (AAGPSQYHGHGHPHHGGGHHHSKHGGAGGGE) and 207 to 233 (ECVGSSEDDMDPSGRENEPPEIDPRAE). The segment covering 60–75 (GHGHPHHGGGHHHSKH) has biased composition (basic residues). Residues 218-233 (PSGRENEPPEIDPRAE) are compositionally biased toward basic and acidic residues. The ELK domain occupies 236 to 256 (ELKFQLLKKYSGYLSSLRQEF). The segment at residues 257 to 320 (SKKKKKGKLP…NQRKRHWKPS (64 aa)) is a DNA-binding region (homeobox; TALE-type).

The protein belongs to the TALE/KNOX homeobox family. In terms of tissue distribution, expressed in stems, rachis and inflorescence.

It localises to the nucleus. In terms of biological role, probable transcription factor that may be involved in shoot formation during embryogenesis. This is Homeobox protein knotted-1-like 12 (OSH15) from Oryza sativa subsp. japonica (Rice).